The chain runs to 226 residues: UPF0758 protein SUB0843 (226 aa).

The MPN domain maps to 103 to 225 (QILSSYQVAK…YYSFREKSDI (123 aa)). Histidine 174, histidine 176, and aspartate 187 together coordinate Zn(2+). The short motif at 174–187 (HNHPSGLTNPSEND) is the JAMM motif element.

The protein belongs to the UPF0758 family.

The sequence is that of UPF0758 protein SUB0843 from Streptococcus uberis (strain ATCC BAA-854 / 0140J).